A 300-amino-acid polypeptide reads, in one-letter code: Ribonuclease HIII (300 aa).

The 215-residue stretch at 86 to 300 (RSRIGVDESG…FNEVLGSGNQ (215 aa)) folds into the RNase H type-2 domain. Residues aspartate 92, glutamate 93, and aspartate 196 each coordinate a divalent metal cation.

It belongs to the RNase HII family. RnhC subfamily. Mn(2+) serves as cofactor. Requires Mg(2+) as cofactor.

The protein resides in the cytoplasm. The enzyme catalyses Endonucleolytic cleavage to 5'-phosphomonoester.. Endonuclease that specifically degrades the RNA of RNA-DNA hybrids. The protein is Ribonuclease HIII of Chlamydia trachomatis serovar A (strain ATCC VR-571B / DSM 19440 / HAR-13).